We begin with the raw amino-acid sequence, 180 residues long: tRNA (cytidine(56)-2'-O)-methyltransferase (180 aa).

S-adenosyl-L-methionine is bound by residues Leu-82, 112–116, and 130–137; these read GAEKV and VGNQPHSE.

This sequence belongs to the aTrm56 family. In terms of assembly, homodimer.

The protein localises to the cytoplasm. It carries out the reaction cytidine(56) in tRNA + S-adenosyl-L-methionine = 2'-O-methylcytidine(56) in tRNA + S-adenosyl-L-homocysteine + H(+). Functionally, specifically catalyzes the AdoMet-dependent 2'-O-ribose methylation of cytidine at position 56 in tRNAs. The sequence is that of tRNA (cytidine(56)-2'-O)-methyltransferase from Methanococcus vannielii (strain ATCC 35089 / DSM 1224 / JCM 13029 / OCM 148 / SB).